Reading from the N-terminus, the 80-residue chain is Sulfur carrier protein TusA (80 aa).

Catalysis depends on C17, which acts as the Cysteine persulfide intermediate.

It belongs to the sulfur carrier protein TusA family.

It is found in the cytoplasm. Its function is as follows. Sulfur carrier protein which probably makes part of a sulfur-relay system. The sequence is that of Sulfur carrier protein TusA from Pseudomonas putida (strain ATCC 47054 / DSM 6125 / CFBP 8728 / NCIMB 11950 / KT2440).